The chain runs to 542 residues: Calcium/calmodulin-dependent protein kinase type II subunit beta (542 aa).

Positions Tyr14 to Val272 constitute a Protein kinase domain. The residue at position 17 (Tyr17) is a Phosphotyrosine. ATP contacts are provided by residues Ile20–Val28 and Lys43. Asp136 serves as the catalytic Proton acceptor. Residues His283–Lys292 form an autoinhibitory domain region. A Phosphothreonine; by autocatalysis modification is found at Thr287. Residues Leu291 to Lys301 are calmodulin-binding. 2 positions are modified to phosphothreonine; by autocatalysis: Thr306 and Thr307. Residues Ala349 to Thr407 form a disordered region. Residues Pro354 to Lys369 show a composition bias toward polar residues. Phosphoserine is present on residues Ser367, Ser394, and Ser397. Phosphothreonine occurs at positions 400 and 401.

Belongs to the protein kinase superfamily. CAMK Ser/Thr protein kinase family. CaMK subfamily. As to quaternary structure, CAMK2 is composed of 4 different chains: alpha (CAMK2A), beta (CAMK2B), gamma (CAMK2G), and delta (CAMK2D). The different isoforms assemble into homo- or heteromultimeric holoenzymes composed of 12 subunits with two hexameric rings stacked one on top of the other. Interacts with SYNGAP1, CAMK2N2 and MPDZ. Interacts with FOXO3. Interacts (when in a kinase inactive state not associated with calmodulin) with ARC; leading to target ARC to inactive synapses. Interacts with CAMK2N1; this interaction requires CAMK2B activation by Ca(2+). Autophosphorylation of Thr-287 following activation by Ca(2+)/calmodulin. Phosphorylation of Thr-287 locks the kinase into an activated state.

It localises to the cytoplasm. The protein localises to the cytoskeleton. Its subcellular location is the microtubule organizing center. The protein resides in the centrosome. It is found in the sarcoplasmic reticulum membrane. It localises to the synapse. The enzyme catalyses L-seryl-[protein] + ATP = O-phospho-L-seryl-[protein] + ADP + H(+). It carries out the reaction L-threonyl-[protein] + ATP = O-phospho-L-threonyl-[protein] + ADP + H(+). Its activity is regulated as follows. Activated by Ca(2+)/calmodulin. Binding of calmodulin results in conformational change that relieves intrasteric autoinhibition and allows autophosphorylation of Thr-287 which turns the kinase in a constitutively active form and confers to the kinase a Ca(2+)-independent activity. Its function is as follows. Calcium/calmodulin-dependent protein kinase that functions autonomously after Ca(2+)/calmodulin-binding and autophosphorylation, and is involved in dendritic spine and synapse formation, neuronal plasticity and regulation of sarcoplasmic reticulum Ca(2+) transport in skeletal muscle. In neurons, plays an essential structural role in the reorganization of the actin cytoskeleton during plasticity by binding and bundling actin filaments in a kinase-independent manner. This structural function is required for correct targeting of CaMK2A, which acts downstream of NMDAR to promote dendritic spine and synapse formation and maintain synaptic plasticity which enables long-term potentiation (LTP) and hippocampus-dependent learning. In developing hippocampal neurons, promotes arborization of the dendritic tree and in mature neurons, promotes dendritic remodeling. Also regulates the migration of developing neurons. Participates in the modulation of skeletal muscle function in response to exercise. In slow-twitch muscles, is involved in regulation of sarcoplasmic reticulum (SR) Ca(2+) transport and in fast-twitch muscle participates in the control of Ca(2+) release from the SR through phosphorylation of triadin, a ryanodine receptor-coupling factor, and phospholamban (PLN/PLB), an endogenous inhibitor of SERCA2A/ATP2A2. In response to interferon-gamma (IFN-gamma) stimulation, catalyzes phosphorylation of STAT1, stimulating the JAK-STAT signaling pathway. Phosphorylates reticulophagy regulator RETREG1 at 'Ser-147' under endoplasmic reticulum stress conditions which enhances RETREG1 oligomerization and its membrane scission and reticulophagy activity. This is Calcium/calmodulin-dependent protein kinase type II subunit beta (CAMK2B) from Bos taurus (Bovine).